Consider the following 311-residue polypeptide: tRNA pseudouridine synthase B (311 aa).

D39 serves as the catalytic Nucleophile. The segment at 237–268 (RELSEQETTEISFGRRIAAGPGAGTPDAATAE) is disordered. The segment covering 254–268 (AAGPGAGTPDAATAE) has biased composition (low complexity).

It belongs to the pseudouridine synthase TruB family. Type 1 subfamily.

It carries out the reaction uridine(55) in tRNA = pseudouridine(55) in tRNA. Functionally, responsible for synthesis of pseudouridine from uracil-55 in the psi GC loop of transfer RNAs. The sequence is that of tRNA pseudouridine synthase B from Paenarthrobacter aurescens (strain TC1).